The chain runs to 179 residues: Large ribosomal subunit protein uL6 (179 aa).

This sequence belongs to the universal ribosomal protein uL6 family. Part of the 50S ribosomal subunit.

Its function is as follows. This protein binds to the 23S rRNA, and is important in its secondary structure. It is located near the subunit interface in the base of the L7/L12 stalk, and near the tRNA binding site of the peptidyltransferase center. The sequence is that of Large ribosomal subunit protein uL6 from Prochlorococcus marinus (strain NATL2A).